Reading from the N-terminus, the 163-residue chain is Retinoic acid receptor responder protein 2 (163 aa).

Positions 1 to 20 (MRRLLIPLALWLGAVGVGVA) are cleaved as a signal peptide. 3 disulfide bridges follow: cysteine 77–cysteine 87, cysteine 98–cysteine 117, and cysteine 101–cysteine 135. A propeptide spanning residues 158–163 (KALPRS) is cleaved from the precursor.

Post-translationally, secreted in an inactive precursor form, prochemerin, which is proteolytically processed by a variety of extracellular proteases to generate forms with differing levels of bioactivity. For example, the removal of six amino acids results in chemerin-157, which exhibits the highest activity, while removal of seven amino acids results in chemerin-156 which has slightly less activity. Some proteases are able to cleave at more than one site and chemerin forms may be sequentially processed by different enzymes to modulate activity levels. The coordinated expression and activity of chemerin-modifying enzymes is essential for regulating its bioactivation, inactivation and, consequently, biological function. Cathepsin G cleaves seven C-terminal amino acids from prochemerin (chemerin-156), elastase is able to cleave six (chemerin-157), eight (chemerin-155) or eleven (chemerin-152), plasmin cleaves five amino acids (chemerin-158), and tryptase cleaves five (chemerin-158) or eight (chemerin-155). Multiple cleavages might be required to fully activate chemerin, with an initial tryptase cleavage resulting in chemerin with low activity (chemerin-158), and a second cleavage by carboxypeptidase N or B producing highly active chemerin (chemerin-157).

The protein resides in the secreted. In terms of biological role, adipocyte-secreted protein (adipokine) that regulates adipogenesis, metabolism and inflammation through activation of the chemokine-like receptor 1 (CMKLR1). Also acts as a ligand for CMKLR2. Can also bind to C-C chemokine receptor-like 2 (CCRL2), but with a lower affinity than it does to CMKLR1 or CMKLR2. Positively regulates adipocyte differentiation, modulates the expression of adipocyte genes involved in lipid and glucose metabolism and might play a role in angiogenesis, a process essential for the expansion of white adipose tissue. Also acts as a pro-inflammatory adipokine, causing an increase in secretion of pro-inflammatory and prodiabetic adipokines, which further impair adipose tissue metabolic function and have negative systemic effects including impaired insulin sensitivity, altered glucose and lipid metabolism, and a decrease in vascular function in other tissues. Can have both pro- and anti-inflammatory properties depending on the modality of enzymatic cleavage by different classes of proteases. Acts as a chemotactic factor for leukocyte populations expressing CMKLR1, particularly immature plasmacytoid dendritic cells, but also immature myeloid DCs, macrophages and natural killer cells. Exerts an anti-inflammatory role by preventing TNF/TNFA-induced VCAM1 expression and monocytes adhesion in vascular endothelial cells. The effect is mediated via inhibiting activation of NF-kappa-B and CRK/p38 through stimulation of AKT1/NOS3 signaling and nitric oxide production. Exhibits an antimicrobial function in the skin. The polypeptide is Retinoic acid receptor responder protein 2 (RARRES2) (Pongo abelii (Sumatran orangutan)).